The sequence spans 317 residues: Forkhead box protein B2 (317 aa).

A DNA-binding region (fork-head) is located at residues 13–107 (KPPYSYISLT…ENGSFLRRRK (95 aa)).

As to expression, first expressed within the dorsolateral ectoderm, except for the organizer territory. During gastrulation, expressed in 2 ectodermal stripes adjacent to the dorsal midline. With the onset of neurulation, expression shifts first to the neural plate before settling on the bottom of the neural tube, on top of the notochord. Expression is then absent until stage 35, at which stage a pair of cells in the fourth rhombomere in the dorsolateral outer area of the rhombencephalon show expression. This is followed shortly afterwards by expression in a pair of cells in rhombomere 6 at the ventricular side of the rhombencephalon.

The protein localises to the nucleus. Functionally, transcription factor. The protein is Forkhead box protein B2 of Xenopus laevis (African clawed frog).